Consider the following 366-residue polypeptide: Sodium-potassium/proton antiporter ChaA (366 aa).

At 1-16 (MSNAQEAVKTRHKETS) the chain is on the cytoplasmic side. The next 2 membrane-spanning stretches (helical) occupy residues 17-37 (LIFP…QTLP) and 38-58 (VVIA…FSVV). Residues 59 to 74 (RHADVLAHRLGEPYGS) lie on the Cytoplasmic side of the membrane. The chain crosses the membrane as a helical span at residues 75 to 95 (LILSLSVVILEVSLISALMAT). Residues 96–106 (GDAAPTLMRDT) lie on the Periplasmic side of the membrane. Residues 107–127 (LYSIIMIVTGGLVGFSLLLGG) traverse the membrane as a helical segment. Topologically, residues 128-143 (RKFATQYMNLFGIKQY) are cytoplasmic. Residues 144–164 (LIALFPLAIIVLVFPMALPAA) traverse the membrane as a helical segment. Over 165–167 (NFS) the chain is Periplasmic. The helical transmembrane segment at 168–188 (TGQALLVALISAAMYGVFLLI) threads the bilayer. At 189–216 (QTKTHQSLFVYEHEDDSDDDDPHHGKPS) the chain is on the cytoplasmic side. The helical transmembrane segment at 217–237 (AHSSLWHAIWLIIHLIAVIAV) threads the bilayer. The Periplasmic portion of the chain corresponds to 238–255 (TKMNASSLETLLDSMNAP). A helical membrane pass occupies residues 256–276 (VAFTGFLVALLILSPEGLGAL). The Cytoplasmic portion of the chain corresponds to 277–290 (KAVLNNQVQRAMNL). The chain crosses the membrane as a helical span at residues 291–311 (FFGSVLATISLTVPVVTLIAF). Over 312–318 (MTGNELQ) the chain is Periplasmic. Residues 319–339 (FALGAPEMVVMVASLVLCHIS) traverse the membrane as a helical segment. The Cytoplasmic segment spans residues 340–345 (FSTGRT). The helical transmembrane segment at 346 to 366 (NVLNGAAHLALFAAYLMTIFA) threads the bilayer.

This sequence belongs to the Ca(2+):cation antiporter (CaCA) (TC 2.A.19) family.

The protein localises to the cell inner membrane. The catalysed reaction is Na(+)(in) + H(+)(out) = Na(+)(out) + H(+)(in). It catalyses the reaction K(+)(in) + H(+)(out) = K(+)(out) + H(+)(in). The enzyme catalyses Ca(2+)(in) + H(+)(out) = Ca(2+)(out) + H(+)(in). Its activity is regulated as follows. Pronounced pH dependence with sodium as substrate. Ca(2+)/H(+) and Na(+)/H(+) antiporter activities are both inhibited by magnesium. Ca(2+)/H(+) activity is inhibited by the proton ionophore carbonyl cyanide m-chlorophenylhydrazone (CCCP). In terms of biological role, sodium exporter that functions mainly at alkaline pH. Can also function as a potassium/proton and calcium/proton antiporter at alkaline pH. Does not play a major role in calcium export. The K(+)/H(+) antiporter activity may enable E.coli to adapt to K(+) salinity stress and to maintain K(+) homeostasis. The chain is Sodium-potassium/proton antiporter ChaA from Escherichia coli (strain K12).